We begin with the raw amino-acid sequence, 273 residues long: WIMGHMVNNINQIEEFVSLGANSIETDVSFDKKANPEYTYHGTPCDCGRDCLRWEYFKDFLNGLRKATTPGDAKYREKLILVVFDLKTGSLYDNQAYDAGKSLAKNLLEYYWNNGNNGGRAYIVLSIPNLAHYKLVTGFKETLKDEGHEDLLEKVGHDFSGNDDIPDIESAYKKAGVTGHVWQSDGITNCLPRTLKRVILAIANRDSGSGIINKVYYWTVDKRSTTRDSLEAGVDGIMTNYPDVIADVLSEAAYKDKYRIATYDDNPWETFKA.

Residue His5 is part of the active site. Mg(2+) is bound by residues Glu25 and Asp27. The Nucleophile role is filled by His41. 2 disulfide bridges follow: Cys45/Cys51 and Cys47/Cys190. Residue Asp85 coordinates Mg(2+).

This sequence belongs to the arthropod phospholipase D family. Class II subfamily. The cofactor is Mg(2+). As to expression, expressed by the venom gland.

It is found in the secreted. It carries out the reaction an N-(acyl)-sphingosylphosphocholine = an N-(acyl)-sphingosyl-1,3-cyclic phosphate + choline. The enzyme catalyses an N-(acyl)-sphingosylphosphoethanolamine = an N-(acyl)-sphingosyl-1,3-cyclic phosphate + ethanolamine. The catalysed reaction is a 1-acyl-sn-glycero-3-phosphocholine = a 1-acyl-sn-glycero-2,3-cyclic phosphate + choline. It catalyses the reaction a 1-acyl-sn-glycero-3-phosphoethanolamine = a 1-acyl-sn-glycero-2,3-cyclic phosphate + ethanolamine. Its function is as follows. Dermonecrotic toxins cleave the phosphodiester linkage between the phosphate and headgroup of certain phospholipids (sphingolipid and lysolipid substrates), forming an alcohol (often choline) and a cyclic phosphate. This toxin acts on sphingomyelin (SM). It may also act on ceramide phosphoethanolamine (CPE), lysophosphatidylcholine (LPC) and lysophosphatidylethanolamine (LPE), but not on lysophosphatidylserine (LPS), and lysophosphatidylglycerol (LPG). It acts by transphosphatidylation, releasing exclusively cyclic phosphate products as second products. Induces dermonecrosis, hemolysis, increased vascular permeability, edema, inflammatory response, and platelet aggregation. This Loxosceles amazonica (Recluse spider) protein is Dermonecrotic toxin LamSicTox-alphaIC1.